The chain runs to 1089 residues: GPI ethanolamine phosphate transferase 3, catalytic subunit (1089 aa).

Residues 4–24 form a helical membrane-spanning segment; sequence ASVLLFLAWVCFLFYAGIALF. An N-linked (GlcNAc...) asparagine glycan is attached at asparagine 268. 13 helical membrane-spanning segments follow: residues 457 to 477, 482 to 502, 510 to 530, 541 to 561, 575 to 595, 668 to 688, 701 to 721, 747 to 767, 830 to 850, 857 to 877, 944 to 964, 1014 to 1034, and 1048 to 1068; these read LLAASCFICLLASQWAISPGF, LLLTPVAWGLVGAIAYAGLLG, LVLLGAVAAVSSFLPFLWKAW, TLFPIPGPVLLLLLFRLAVFF, FLLGSFILLLVVQLHWEGQLL, LWYGACVAALVALLAAVRLWL, MLFVRWGLPLMALGTAAYWAL, VAGLAASGLALLLWKPVTVLV, SVYSAAMVTALTLLAFPLLLL, LVFLLLFLQSFLLLHLLAAGI, FASHLLFAVGCPLLLLWPFLC, LKYLFILGIQILACALAASIL, and FIFEAVGFIVSSVGLLLGIAL.

Belongs to the PIGG/PIGN/PIGO family. PIGO subfamily. In terms of assembly, part of the ethanolamine phosphate transferase 3 complex composed by PIGO and PIGF. PIGF is required to stabilize PIGO.

The protein resides in the endoplasmic reticulum membrane. It functions in the pathway glycolipid biosynthesis; glycosylphosphatidylinositol-anchor biosynthesis. In terms of biological role, catalytic subunit of the ethanolamine phosphate transferase 3 complex that transfers an ethanolamine phosphate (EtNP) from a phosphatidylethanolamine (PE) to the 6-OH position of the third alpha-1,2-linked mannose of an alpha-D-Man-(1-&gt;2)-alpha-D-Man-(1-&gt;6)-2-PEtn-alpha-D-Man-(1-&gt;4)-alpha-D-GlcN-(1-&gt;6)-(1-radyl,2-acyl-sn-glycero-3-phospho)-2-acyl-inositol (also termed H6) intermediate to generate a 6-PEtn-alpha-D-Man-(1-&gt;2)-alpha-D-Man-(1-&gt;6)-2-PEtn-alpha-D-Man-(1-&gt;4)-alpha-D-GlcN-(1-&gt;6)-(1-radyl,2-acyl-sn-glycero-3-phospho)-2-acyl-inositol (also termed H7) and participates in the tenth step of the glycosylphosphatidylinositol-anchor biosynthesis. The polypeptide is GPI ethanolamine phosphate transferase 3, catalytic subunit (Homo sapiens (Human)).